The primary structure comprises 733 residues: Hypermethylated in cancer 1 protein (733 aa).

The BTB domain occupies 47–110 (CDVIIVVQNA…IYTGRLADGA (64 aa)). Residues 154–315 (KYCHLRGGGG…PFRGGSGSPG (162 aa)) form a mediates HDAC-dependent transcriptional repression region. Arg-159 is subject to Omega-N-methylarginine. Positions 189–209 (YPSPVGPPPPPAAEPPSGPEA) are disordered. A compositionally biased stretch (pro residues) spans 192 to 206 (PVGPPPPPAAEPPSG). The residue at position 237 (Ser-237) is a Phosphoserine. The segment at 241-247 (GLDLSKK) is interaction with CTBP1. Positions 241–421 (GLDLSKKSPP…PGGHLEGYPC (181 aa)) are disordered. The residue at position 248 (Ser-248) is a Phosphoserine. Residues 284-293 (LALPSLPPLP) show a composition bias toward pro residues. At Lys-333 the chain carries N6-acetyllysine; alternate. A Glycyl lysine isopeptide (Lys-Gly) (interchain with G-Cter in SUMO); alternate cross-link involves residue Lys-333. Over residues 344-361 (ELGRERGSPSERCEERGG) the composition is skewed to basic and acidic residues. Ser-366 carries the post-translational modification Phosphoserine. Over residues 368 to 380 (GGPPLGLAPPPRY) the composition is skewed to pro residues. C2H2-type zinc fingers lie at residues 439–459 (CIPC…VEAH), 509–529 (CASC…EKTH), 537–557 (CTIC…MRSH), 565–585 (CDAC…MRIH), and 593–613 (CQVC…MKMH). The residue at position 704 (Ser-704) is a Phosphoserine.

Belongs to the krueppel C2H2-type zinc-finger protein family. Hic subfamily. In terms of assembly, self-associates. Interacts with HIC2. Interacts with CTBP1 and CTBP2. Interacts with TCF7L2 and ARID1A. Interacts with MTA1 and MBD3; indicative for an association with the NuRD complex. Interacts with SIRT1. Acetylated on several residues, including Lys-333. Lys-333 is deacetylated by SIRT1. Post-translationally, sumoylated on Lys-333 by a PIAS family member, which enhances interaction with MTA1, positively regulates transcriptional repression activity and is enhanced by HDAC4. Ubiquitously expressed with highest levels found in lung, colon, prostate, thymus, testis and ovary. Expression is absent or decreased in many tumor cells.

Its subcellular location is the nucleus. Its function is as follows. Transcriptional repressor. Recognizes and binds to the consensus sequence '5-[CG]NG[CG]GGGCA[CA]CC-3'. May act as a tumor suppressor. Involved in development of head, face, limbs and ventral body wall. Involved in down-regulation of SIRT1 and thereby is involved in regulation of p53/TP53-dependent apoptotic DNA-damage responses. The specific target gene promoter association seems to be depend on corepressors, such as CTBP1 or CTBP2 and MTA1. In cooperation with MTA1 (indicative for an association with the NuRD complex) represses transcription from CCND1/cyclin-D1 and CDKN1C/p57Kip2 specifically in quiescent cells. Involved in regulation of the Wnt signaling pathway probably by association with TCF7L2 and preventing TCF7L2 and CTNNB1 association with promoters of TCF-responsive genes. Seems to repress transcription from E2F1 and ATOH1 which involves ARID1A, indicative for the participation of a distinct SWI/SNF-type chromatin-remodeling complex. Probably represses transcription of ACKR3, FGFBP1 and EFNA1. The sequence is that of Hypermethylated in cancer 1 protein (HIC1) from Homo sapiens (Human).